Reading from the N-terminus, the 71-residue chain is Small ribosomal subunit protein bS18 (71 aa).

This sequence belongs to the bacterial ribosomal protein bS18 family. Part of the 30S ribosomal subunit. Forms a tight heterodimer with protein bS6.

Binds as a heterodimer with protein bS6 to the central domain of the 16S rRNA, where it helps stabilize the platform of the 30S subunit. The chain is Small ribosomal subunit protein bS18 from Nostoc punctiforme (strain ATCC 29133 / PCC 73102).